Here is a 492-residue protein sequence, read N- to C-terminus: Catalase-3 (492 aa).

Active-site residues include His-65 and Asn-138. Tyr-348 lines the heme pocket.

This sequence belongs to the catalase family. In terms of assembly, homotetramer and heterotetramer. At least six or seven isozymes are produced from a mixture of 3 gene products. Interacts with NCA1. Interacts with LSD1. Requires heme as cofactor.

The protein localises to the peroxisome. The enzyme catalyses 2 H2O2 = O2 + 2 H2O. In terms of biological role, occurs in almost all aerobically respiring organisms and serves to protect cells from the toxic effects of hydrogen peroxide. This chain is Catalase-3 (CAT3), found in Arabidopsis thaliana (Mouse-ear cress).